A 605-amino-acid polypeptide reads, in one-letter code: MNHFPKLLSSQIGFDVAQTMLENFDRHYRIFREAAVEAKTLYEHGDWHGLQRLARERITSYDDRVKECVEVLEDEYDAENIDDEVWQQIKLHYIGLLTSHRQPECAETFFNSVCCKILHRSYFSNDFIFVRPAISTEYLENDEPAAKPTYRAYYPGTDGLATTLERIVTNFQLEPAFDDLPRDIGCVMQAIHDEFGHFDEAPNFQIHVLSSLFFRNKSAYIVGRIINADRVLPFAVPIRHVRPGVLSLDTVLLRRDQLMIIFGFSHSYFLVDMGVPSAYVDFLCTIMPGKPKAEIYTSVGLQKQGKNLFYRDLLHHLSHSSDRFIIAPGIKGLVMLVFTLPSFPYVFKIIKDHFPPPKETTRAQIMEKYQLVKRHDRLGRMADTLEYSSVALPIARLDHALVRELEKEVPSLLEYEDGNLVIEHLYIERRMTPLNLYLQNGSDSDVEHGVKEYGNAVKELMKANIFPGDMLYKNFGVTRHGRVVFYDYDEIEYLTDCNVRRVPPPRNEEDELSGEPWYTVGPHDIFPETYGPFLLGDPRVRDVFMKHHADFFDPALWQASKDKLIQGELPDFYPYDTALRFCTRYPARFGATDQNDGAGDAQRAA.

ATP is bound by residues 327 to 333 (APGIKGL) and K348. The active site involves D383.

The protein belongs to the AceK family.

It is found in the cytoplasm. It catalyses the reaction L-seryl-[isocitrate dehydrogenase] + ATP = O-phospho-L-seryl-[isocitrate dehydrogenase] + ADP + H(+). Its function is as follows. Bifunctional enzyme which can phosphorylate or dephosphorylate isocitrate dehydrogenase (IDH) on a specific serine residue. This is a regulatory mechanism which enables bacteria to bypass the Krebs cycle via the glyoxylate shunt in response to the source of carbon. When bacteria are grown on glucose, IDH is fully active and unphosphorylated, but when grown on acetate or ethanol, the activity of IDH declines drastically concomitant with its phosphorylation. In Burkholderia lata (strain ATCC 17760 / DSM 23089 / LMG 22485 / NCIMB 9086 / R18194 / 383), this protein is Isocitrate dehydrogenase kinase/phosphatase.